The chain runs to 306 residues: Pantothenate kinase (306 aa).

90–97 (GSVAVGKS) provides a ligand contact to ATP.

It belongs to the prokaryotic pantothenate kinase family.

It is found in the cytoplasm. It carries out the reaction (R)-pantothenate + ATP = (R)-4'-phosphopantothenate + ADP + H(+). It participates in cofactor biosynthesis; coenzyme A biosynthesis; CoA from (R)-pantothenate: step 1/5. This is Pantothenate kinase (coaA) from Listeria innocua serovar 6a (strain ATCC BAA-680 / CLIP 11262).